The sequence spans 699 residues: Long-chain-fatty-acid--CoA ligase 1 (699 aa).

Met1 is modified (N-acetylmethionine). A 3'-nitrotyrosine modification is found at Tyr9. The helical; Signal-anchor for type III membrane protein transmembrane segment at Leu25–Ala45 threads the bilayer. The Cytoplasmic segment spans residues Thr46 to Ile699. Tyr85 is subject to Phosphotyrosine. Tyr86 carries the post-translational modification 3'-nitrotyrosine. Ser136 carries an O-linked (GlcNAc) serine glycan. Residues Lys208, Lys357, and Lys387 each carry the N6-acetyllysine modification. Ser621 carries the post-translational modification Phosphoserine. Lys633 carries the N6-acetyllysine modification.

This sequence belongs to the ATP-dependent AMP-binding enzyme family. Mg(2+) is required as a cofactor.

The protein localises to the mitochondrion outer membrane. It localises to the peroxisome membrane. The protein resides in the microsome membrane. It is found in the endoplasmic reticulum membrane. It catalyses the reaction a long-chain fatty acid + ATP + CoA = a long-chain fatty acyl-CoA + AMP + diphosphate. It carries out the reaction (5Z,8Z,11Z,14Z)-eicosatetraenoate + ATP + CoA = (5Z,8Z,11Z,14Z)-eicosatetraenoyl-CoA + AMP + diphosphate. The enzyme catalyses 3,7,11,15-tetramethylhexadecanoate + ATP + CoA = phytanoyl-CoA + AMP + diphosphate. The catalysed reaction is hexadecanoate + ATP + CoA = hexadecanoyl-CoA + AMP + diphosphate. It catalyses the reaction (E)-hexadec-2-enoate + ATP + CoA = (2E)-hexadecenoyl-CoA + AMP + diphosphate. It carries out the reaction 2,6,10,14-tetramethylpentadecanoate + ATP + CoA = pristanoyl-CoA + AMP + diphosphate. The enzyme catalyses 14,15-epoxy-(5Z,8Z,11Z)-eicosatrienoate + ATP + CoA = 14,15-epoxy-(5Z,8Z,11Z)-eicosatrienoyl-CoA + AMP + diphosphate. The catalysed reaction is 5-hydroxy-(6E,8Z,11Z,14Z)-eicosatetraenoate + ATP + CoA = 5-hydroxy-(6E,8Z,11Z,14Z)-eicosatetraenoyl-CoA + AMP + diphosphate. It catalyses the reaction 12-hydroxy-(5Z,8Z,10E,14Z)-eicosatetraenoate + ATP + CoA = 12-hydroxy-(5Z,8Z,10E,14Z)-eicosatetraenoyl-CoA + AMP + diphosphate. It carries out the reaction 15-hydroxy-(5Z,8Z,11Z,13E)-eicosatetraenoate + ATP + CoA = 15-hydroxy-(5Z,8Z,11Z,13E)-eicosatetraenoyl-CoA + AMP + diphosphate. The enzyme catalyses (9Z)-octadecenoate + ATP + CoA = (9Z)-octadecenoyl-CoA + AMP + diphosphate. With respect to regulation, inhibited at high temperature and by arachidonate. Functionally, catalyzes the conversion of long-chain fatty acids to their active form acyl-CoAs for both synthesis of cellular lipids, and degradation via beta-oxidation. Preferentially uses palmitoleate, oleate and linoleate. Preferentially activates arachidonate than epoxyeicosatrienoic acids (EETs) or hydroxyeicosatrienoic acids (HETEs). This is Long-chain-fatty-acid--CoA ligase 1 from Mus musculus (Mouse).